A 268-amino-acid polypeptide reads, in one-letter code: Nickel import ATP-binding protein NikE (268 aa).

In terms of domain architecture, ABC transporter spans 4–252 (LNVSDLSHHY…SSDAGRVLQN (249 aa)). Residue 45 to 52 (GRSGCGKS) coordinates ATP.

It belongs to the ABC transporter superfamily. Nickel importer (TC 3.A.1.5.3) family. In terms of assembly, the complex is composed of two ATP-binding proteins (NikD and NikE), two transmembrane proteins (NikB and NikC) and a solute-binding protein (NikA).

It localises to the cell inner membrane. The catalysed reaction is Ni(2+)(out) + ATP + H2O = Ni(2+)(in) + ADP + phosphate + H(+). Part of the ABC transporter complex NikABCDE involved in nickel import. Responsible for energy coupling to the transport system. This is Nickel import ATP-binding protein NikE from Escherichia coli O6:K15:H31 (strain 536 / UPEC).